The following is a 138-amino-acid chain: MELIRFSISIPSKLLEKFDQIIEEIGYENRSEAIRDLIRDFIIRHEWEVGNEEVAGTITIVYNHDEGDVVKALLDLQHEYLDEIISSLHVHMDEHNCLEVIVVKGEAKKIKMIADKLLSLKGVKHGKLVMTSTGKELV.

Residues His-78, His-89, His-91, and Cys-97 each contribute to the Ni(2+) site.

This sequence belongs to the transcriptional regulatory CopG/NikR family. Ni(2+) is required as a cofactor.

In terms of biological role, transcriptional regulator. The polypeptide is Putative nickel-responsive regulator (Pyrococcus horikoshii (strain ATCC 700860 / DSM 12428 / JCM 9974 / NBRC 100139 / OT-3)).